A 2256-amino-acid chain; its full sequence is GON-4-like protein (2256 aa).

Disordered stretches follow at residues 1–56 (MLPC…DSAG), 105–213 (PSLE…SLGP), and 227–266 (LFIP…MTYD). A compositionally biased stretch (basic and acidic residues) spans 23–35 (EDLHLEAAVKPDT). The segment covering 40–53 (DCTSESLSWGQSHD) has biased composition (polar residues). Residues 141-176 (TREDGGDHTVPEEPPSGEHAEEVKAEGGELEMHSEG) show a composition bias toward basic and acidic residues. A compositionally biased stretch (basic residues) spans 242–254 (RKKTKKGTKRKRD). Residue S346 is modified to Phosphoserine. Residues 366–395 (EDDDSSDEEYQPDEEEEDETAEESLLESDV) show a composition bias toward acidic residues. 3 disordered regions span residues 366-428 (EDDD…VLSE), 441-460 (SAEV…QTRD), and 545-573 (DVEN…DTED). A compositionally biased stretch (acidic residues) spans 545 to 571 (DVENEDEADDDDDPEYNFLEDLDEPDT). The segment at 609 to 1363 (EMGFSNMEDD…DCMEEISSDF (755 aa)) is required for interaction with YY1, SIN3A and HDAC1, and transcriptional repression activity. A Phosphoserine modification is found at S783. 2 stretches are compositionally biased toward low complexity: residues 947–959 (TAGG…TETS) and 1094–1115 (PWSE…LPSL). 4 disordered regions span residues 947-969 (TAGG…KTSP), 1078-1141 (AALP…SPCV), 1241-1288 (AEGK…EAVS), and 1360-1620 (SSDF…SRAR). A compositionally biased stretch (basic residues) spans 1119–1135 (KFRKPYVRRKPTRRKGA). Over residues 1364-1386 (PKQDIGEEVKEECCMELDRDSPQ) the composition is skewed to basic and acidic residues. 2 stretches are compositionally biased toward polar residues: residues 1387–1401 (EKAS…QTAT) and 1429–1444 (LPQS…TVLN). Residue S1445 is modified to Phosphoserine. A compositionally biased stretch (acidic residues) spans 1475–1495 (GAEEEEEEDFDDLTQDEEDEL). A compositionally biased stretch (low complexity) spans 1496 to 1510 (SSASEESVLSVPELQ). Residues 1529–1553 (GESEEENSQEENSEPEEEEEEEAEG) show a composition bias toward acidic residues. Residues 1606 to 1620 (RSSHRARSRRGSRAR) show a composition bias toward basic residues. PAH domains lie at 1644–1716 (EQKD…LLPE) and 1726–1797 (EQQA…FDHL). 2 disordered regions span residues 1831 to 1886 (VEEE…LKKS) and 1909 to 1966 (LELV…APIP). Basic and acidic residues predominate over residues 1851–1868 (EIGVQHQDKESEWPEAAK). 2 positions are modified to phosphoserine: S1921 and S1994. Disordered stretches follow at residues 2050-2078 (PETS…STRD) and 2110-2148 (IRGT…VLPK). The span at 2111 to 2129 (RGTSSGASASEAAPTASRE) shows a compositional bias: low complexity. The 54-residue stretch at 2163–2216 (STGEKVVLWTREADRVILTMCQEQGAQPHTFSVISQQLGNKTPVEVSHRFRELM) folds into the Myb-like domain. Residues 2223 to 2256 (CEASSEDEDDATSTSNADQLSDHGDLLSEEELDE) are disordered.

As to quaternary structure, found in a complex with YY1, SIN3A and HDAC1.

The protein resides in the nucleus. In terms of biological role, has transcriptional repressor activity, probably as part of a complex with YY1, SIN3A and HDAC1. Required for B cell lymphopoiesis. This chain is GON-4-like protein (Gon4l), found in Rattus norvegicus (Rat).